Here is an 875-residue protein sequence, read N- to C-terminus: Alanine--tRNA ligase (875 aa).

Zn(2+) is bound by residues His-562, His-566, Cys-665, and His-669.

Belongs to the class-II aminoacyl-tRNA synthetase family. Zn(2+) is required as a cofactor.

It localises to the cytoplasm. It carries out the reaction tRNA(Ala) + L-alanine + ATP = L-alanyl-tRNA(Ala) + AMP + diphosphate. Its function is as follows. Catalyzes the attachment of alanine to tRNA(Ala) in a two-step reaction: alanine is first activated by ATP to form Ala-AMP and then transferred to the acceptor end of tRNA(Ala). Also edits incorrectly charged Ser-tRNA(Ala) and Gly-tRNA(Ala) via its editing domain. The sequence is that of Alanine--tRNA ligase from Saccharophagus degradans (strain 2-40 / ATCC 43961 / DSM 17024).